Reading from the N-terminus, the 235-residue chain is Phosphoribosylaminoimidazole-succinocarboxamide synthase (235 aa).

This sequence belongs to the SAICAR synthetase family.

The catalysed reaction is 5-amino-1-(5-phospho-D-ribosyl)imidazole-4-carboxylate + L-aspartate + ATP = (2S)-2-[5-amino-1-(5-phospho-beta-D-ribosyl)imidazole-4-carboxamido]succinate + ADP + phosphate + 2 H(+). It participates in purine metabolism; IMP biosynthesis via de novo pathway; 5-amino-1-(5-phospho-D-ribosyl)imidazole-4-carboxamide from 5-amino-1-(5-phospho-D-ribosyl)imidazole-4-carboxylate: step 1/2. This chain is Phosphoribosylaminoimidazole-succinocarboxamide synthase, found in Chloroherpeton thalassium (strain ATCC 35110 / GB-78).